Here is a 626-residue protein sequence, read N- to C-terminus: MSTNQETRGFQSEVKQLLQLMIHSLYSNKEIFLRELISNASDAADKLRFKALSAPELYEGDGDLKVRISFDAEKGTLTISDNGIGMTREQVIDHLGTIAKSGTKEFLAALGQEQAKDSQLIGQFGVGFYSAFIVADKVTVKTRAAGEPIDRAVLWESAGEGEYSVADIEKRERGTEITLHLREEEKEFANEWRVREIIGKYSDHIGLPVEILAKEYDEEGKETGIKWEKINKAQALWTRSKGEISDEEYKEFYKHLSHDFADPLLWTHNKVEGNQEYTSLLYVPSKAPWDLFNREHKHGLKLYVQRVFIMDDAEQFMPNYLRFMRGLIDSNDLPLNVSREILQDNKVTAALRKALTKRSLQMLEKLAKDDEEKYLQFWKEFGLVLKEGPSEDFANKENIAKLLRFASSKNDSSEQTVSLEDYVARMKEGQKAIYYITADSYIAAKNSPHLELFNKKDIEVLLLSDRIDEWMLSYLTEFDGKQLQPITKADLDLGDLADKEQEEQKEQDKTFSSFIERVKTLLGERVKDVRLTHRLTDTPAVVSTDNDQMTTQMAKLFAAAGQPVPEVKYTFELNPEHHLVKKVADFADEDEFANWIELLLEQAMLAERGSLENPTAFIKRVNNLLG.

The interval 1–339 (MSTNQETRGF…SNDLPLNVSR (339 aa)) is a; substrate-binding. Residues 340–555 (EILQDNKVTA…NDQMTTQMAK (216 aa)) are b. A c region spans residues 556–626 (LFAAAGQPVP…FIKRVNNLLG (71 aa)).

It belongs to the heat shock protein 90 family. In terms of assembly, homodimer.

It is found in the cytoplasm. Molecular chaperone. Has ATPase activity. This is Chaperone protein HtpG from Histophilus somni (strain 2336) (Haemophilus somnus).